The following is a 501-amino-acid chain: MAAAALLLLAAAAAIVVVAMVLRWLLLLGGPAAGRLGKRALMPPGSTGLPLIGETLRLISAYKTPNPEPFIDERVARHGGVFTTHVFGERTVFSADPAFNRLLLAAEGRAVHSSYPSSIATLLGARSLLLTRGAAHKRLHSLTLTRLGRPASPPLLAHIDRLVLATMRQWEPAATVRLMDEAKKITFNLTVKQLVSIEPGPWTESLRREYVKLIDGFFSIPFPLANLLPFTTYGQALKARKKVAGALREVIKKRMEEKAENGGSIGDDEGKKEKKDMVEELLEAEGGSFSEEEMVDFCLSLLVAGYETTSMLMTLAVKFLTETPAALAELKEEHANIRDMKGKKQPLEWSDYKSMPFTQCVINETLRVGNIISGVFRRANTDIHYKDYTIPKGCKIFASFRAVHLNNEHYENARTFNPWRWQINNKLQNAVGANIFTPFGGGPRLCPGYELARVVVSIFLHHLVTRFSWEETEEDRLVFFPTTRTLKGYPINLRLLSESIC.

The chain crosses the membrane as a helical span at residues 2–22; that stretch reads AAAALLLLAAAAAIVVVAMVL. Cysteine 446 is a binding site for heme.

Belongs to the cytochrome P450 family. Heme serves as cofactor. As to expression, highly expressed in shoot apex and inflorenscence. Expressed in roots, stems, leaf blades and leaf sheaths.

It localises to the membrane. Its pathway is plant hormone biosynthesis; brassinosteroid biosynthesis. Functionally, catalyzes the C23-alpha-hydroxylation step in brassinosteroid biosynthesis. Converts 6-deoxocathasterone (6-deoxoCT) to 6-deoxoteasterone (6-deoxoTE) in the late C6-oxidation pathway and cathasterone (CT) to teasterone (TE) in the early C6-oxidation pathway of brassinolide (BL) biosynthesis. In Oryza sativa subsp. japonica (Rice), this protein is Cytochrome P450 90A3.